We begin with the raw amino-acid sequence, 2647 residues long: Filamin-A (2647 aa).

The segment covering 1-15 (MSSSHSRAGQSAAGA) has biased composition (low complexity). The disordered stretch occupies residues 1-39 (MSSSHSRAGQSAAGAAPGGGVDTRDAEMPATEKDLAEDA). The residue at position 2 (Ser-2) is an N-acetylserine. The interval 2–274 (SSSHSRAGQS…PKAKLKPGAP (273 aa)) is actin-binding. Residue Ser-11 is modified to Phosphoserine. The segment covering 22 to 39 (DTRDAEMPATEKDLAEDA) has biased composition (basic and acidic residues). Glycyl lysine isopeptide (Lys-Gly) (interchain with G-Cter in ubiquitin) cross-links involve residues Lys-42, Lys-43, and Lys-135. Calponin-homology (CH) domains are found at residues 43-149 (KIQQ…LHYS) and 166-269 (QTPK…KAKL). Residues 271-294 (PGAPLRPKLNPKKARAYGPGIEPT) are disordered. Filamin repeat units lie at residues 276–374 (RPKL…EVYV), 376–474 (KSQG…TVTV), 475–570 (GQAC…EVKV), 571–663 (GTEC…MADI), 667–763 (PQDF…RVNV), 764–866 (GAGS…RVKV), 867–965 (EPSH…SVAV), 966–1061 (SPSL…PLEA), 1062–1154 (VAPT…KAHV), 1155–1249 (VPCF…KLQV), 1250–1349 (EPAV…QVPV), 1350–1442 (TEGC…KVPV), 1443–1539 (HDVT…KVKV), 1540–1636 (LPTH…RVRA), and 1649–1740 (VSIG…QVTA). Lys-299 participates in a covalent cross-link: Glycyl lysine isopeptide (Lys-Gly) (interchain with G-Cter in SUMO1); alternate. A Glycyl lysine isopeptide (Lys-Gly) (interchain with G-Cter in SUMO2); alternate cross-link involves residue Lys-299. 2 positions are modified to N6-acetyllysine: Lys-376 and Lys-508. N6-acetyllysine is present on residues Lys-700, Lys-781, Lys-837, Lys-865, and Lys-906. Ser-968 and Ser-1055 each carry phosphoserine. Lys-1071 carries the post-translational modification N6-acetyllysine; alternate. N6-succinyllysine; alternate is present on Lys-1071. A phosphoserine mark is found at Ser-1081 and Ser-1084. Position 1089 is a phosphothreonine (Thr-1089). A phosphoserine mark is found at Ser-1301 and Ser-1338. Positions 1361–1382 (HGPGIQSGTTNKPNKFTVETRG) are disordered. The residue at position 1372 (Lys-1372) is an N6-acetyllysine. Phosphoserine occurs at positions 1459 and 1533. Residues 1490–1607 (PKGLVEPVDV…DNHDGTYTVA (118 aa)) form an interaction with furin region. Position 1538 is an N6-acetyllysine (Lys-1538). 2 positions are modified to phosphoserine: Ser-1630 and Ser-1734. The hinge 1 stretch occupies residues 1741-1778 (LAGDQPSVQPPLRSQQLAPQYTYAQGGQQTWAPERPLV). 8 Filamin repeats span residues 1779–1860 (GVNG…QFYV), 1861–1950 (DYVN…PFTA), 1951–2039 (RVTG…PVVI), 2042–2131 (SEIG…SPFS), 2132–2230 (VKVT…QFTV), 2233–2325 (LGEG…VVPV), 2327–2420 (SPSG…KIRV), and 2424–2516 (GHGG…KAKV). Position 1835 is a phosphoserine (Ser-1835). Phosphoserine is present on residues Ser-1967, Ser-2053, Ser-2128, Ser-2152, Ser-2158, Ser-2163, Ser-2180, Ser-2284, Ser-2327, and Ser-2329. Phosphothreonine is present on Thr-2336. Phosphoserine is present on residues Ser-2338, Ser-2370, Ser-2414, Ser-2510, Ser-2523, and Ser-2526. The hinge 2 stretch occupies residues 2517–2551 (TGPRLVSNHSLHETSSVFVDSLTKATCAPQHGAPG). The tract at residues 2517 to 2647 (TGPRLVSNHS…PGSPYRVVVP (131 aa)) is self-association site, tail. A Filamin 24 repeat occupies 2552 to 2646 (PGPADASKVV…IPGSPYRVVV (95 aa)). Lys-2569 carries the N6-acetyllysine; alternate modification. Lys-2569 carries the post-translational modification N6-succinyllysine; alternate. The residue at position 2575 (Lys-2575) is an N6-acetyllysine. The residue at position 2599 (Thr-2599) is a Phosphothreonine. Residues Lys-2607 and Lys-2621 each carry the N6-acetyllysine modification.

Belongs to the filamin family. In terms of assembly, homodimer. Interacts with PDLIM2. Interacts with RFLNA and RFLNB. Interacts with FCGR1A, FLNB, FURIN, HSPB7, INPPL1, KCND2, MYOT, MYOZ1, ARHGAP24, PSEN1, PSEN2 and ECSCR. Also interacts with various other binding partners in addition to filamentous actin. Interacts (via N-terminus) with MIS18BP1 (via N-terminus). Interacts (via N-terminus) with TAF1B. Interacts with TMEM67 (via C-terminus) and MKS1. Interacts (via actin-binding domain) with MICALL2 (via CH domain). Interacts (via filamin repeat 5) with SYK; docks SYK to the plasma membrane. Interacts (via filamin repeats 19 and 21) with DRD3; increased PKA-mediated phosphorylation at Ser-2152. Interacts (via filamin repeat 21) with MAS1, AGTR1 and ADRA1D; increases PKA-mediated phosphorylation of FLNA at Ser-2152. Interacts (via filamin repeats 4, 9, 12, 17, 19, 21, and 23) with GP1BA (high affinity), ITGB7, ITGB2 and FBLIM1. Interacts with CEACAM1 (via cytoplasmic domain); inhibits cell migration and cell scattering by interfering with the interaction between FLNA and RALA. Interacts with FOXC1. Interacts (via calponin-homology (CH) domain 1 and filamin repeat 24) with CRMP1; the interaction alters FLNA ternary structure and thus promotes FLNA dissociation from F-actin. Interacts with DPYSL3/CRMP3 and DPYSL4/CRMP4. Interacts with integrin ITGB1 isoform 1/beta-1A and isoform 5/beta-1D. Interacts with LUZP1; the interaction is not necessary for colocalization of LUZP1 with F-actin. Phosphorylation at Ser-2152 is negatively regulated by the autoinhibited conformation of filamin repeats 19-21. Ligand binding induces a conformational switch triggering phosphorylation at Ser-2152 by PKA. Post-translationally, phosphorylation extent changes in response to cell activation. In terms of processing, polyubiquitination in the CH1 domain by a SCF-like complex containing ASB2 leads to proteasomal degradation. Prior dissociation from actin may be required to expose the target lysines. Ubiquitinated in endothelial cells by RNF213 downstream of the non-canonical Wnt signaling pathway, leading to its degradation by the proteasome. Ubiquitous.

The protein resides in the cytoplasm. Its subcellular location is the cell cortex. It localises to the cytoskeleton. It is found in the perikaryon. The protein localises to the cell projection. The protein resides in the growth cone. Its subcellular location is the podosome. In terms of biological role, promotes orthogonal branching of actin filaments and links actin filaments to membrane glycoproteins. Anchors various transmembrane proteins to the actin cytoskeleton and serves as a scaffold for a wide range of cytoplasmic signaling proteins. Interaction with FLNB may allow neuroblast migration from the ventricular zone into the cortical plate. Tethers cell surface-localized furin, modulates its rate of internalization and directs its intracellular trafficking. Involved in ciliogenesis. Plays a role in cell-cell contacts and adherens junctions during the development of blood vessels, heart and brain organs. Plays a role in platelets morphology through interaction with SYK that regulates ITAM- and ITAM-like-containing receptor signaling, resulting in by platelet cytoskeleton organization maintenance. During the axon guidance process, required for growth cone collapse induced by SEMA3A-mediated stimulation of neurons. The polypeptide is Filamin-A (FLNA) (Homo sapiens (Human)).